A 212-amino-acid chain; its full sequence is Probable GTP-binding protein EngB (212 aa).

The region spanning Gly27 to Pro201 is the EngB-type G domain. GTP contacts are provided by residues Gly35–Ser42, Gly62–Leu66, Asp80–Gly83, Thr147–Asp150, and Phe180–Ser182. Residues Ser42 and Thr64 each contribute to the Mg(2+) site.

This sequence belongs to the TRAFAC class TrmE-Era-EngA-EngB-Septin-like GTPase superfamily. EngB GTPase family. Requires Mg(2+) as cofactor.

Necessary for normal cell division and for the maintenance of normal septation. In Tolumonas auensis (strain DSM 9187 / NBRC 110442 / TA 4), this protein is Probable GTP-binding protein EngB.